The primary structure comprises 86 residues: Putative pro-MCH-like protein 2 (86 aa).

The tract at residues 31 to 49 is NGE-like; it reads GSVAFPAENGVQDTESTLE. The segment at 40 to 60 is disordered; that stretch reads GVQDTESTLEKRETGDEENSA. The interval 52–64 is NEI-like; that stretch reads ETGDEENSAKFPI. The tract at residues 68–86 is melanin-concentrating hormone-like; that stretch reads DFDTLRCMLGRVYQRCWQV.

Belongs to the melanin-concentrating hormone family. Expressed in testis but not in brain.

This chain is Putative pro-MCH-like protein 2 (PMCHL2), found in Homo sapiens (Human).